Consider the following 463-residue polypeptide: Cysteine--tRNA ligase (463 aa).

Cys33 is a Zn(2+) binding site. The short motif at 35–45 is the 'HIGH' region element; the sequence is PTVYDFAHIGN. Cys221, His246, and Glu250 together coordinate Zn(2+). A 'KMSKS' region motif is present at residues 279 to 283; that stretch reads KMSKS. Lys282 provides a ligand contact to ATP.

It belongs to the class-I aminoacyl-tRNA synthetase family. Monomer. Requires Zn(2+) as cofactor.

It is found in the cytoplasm. It carries out the reaction tRNA(Cys) + L-cysteine + ATP = L-cysteinyl-tRNA(Cys) + AMP + diphosphate. The chain is Cysteine--tRNA ligase from Rhizobium johnstonii (strain DSM 114642 / LMG 32736 / 3841) (Rhizobium leguminosarum bv. viciae).